Consider the following 310-residue polypeptide: Ribosomal RNA small subunit methyltransferase H (310 aa).

S-adenosyl-L-methionine-binding positions include 47 to 49 (GGH), aspartate 66, phenylalanine 93, aspartate 108, and glutamine 115.

It belongs to the methyltransferase superfamily. RsmH family.

The protein resides in the cytoplasm. It carries out the reaction cytidine(1402) in 16S rRNA + S-adenosyl-L-methionine = N(4)-methylcytidine(1402) in 16S rRNA + S-adenosyl-L-homocysteine + H(+). In terms of biological role, specifically methylates the N4 position of cytidine in position 1402 (C1402) of 16S rRNA. The polypeptide is Ribosomal RNA small subunit methyltransferase H (Prochlorococcus marinus (strain MIT 9303)).